The following is a 115-amino-acid chain: NADH-ubiquinone oxidoreductase chain 3 (115 aa).

The next 3 membrane-spanning stretches (helical) occupy residues 4–24, 55–75, and 84–104; these read LMIL…AFWL, FFLV…LLPL, and INMM…GLAY.

This sequence belongs to the complex I subunit 3 family. Core subunit of respiratory chain NADH dehydrogenase (Complex I) which is composed of 45 different subunits. Interacts with TMEM186. Interacts with TMEM242.

Its subcellular location is the mitochondrion inner membrane. It carries out the reaction a ubiquinone + NADH + 5 H(+)(in) = a ubiquinol + NAD(+) + 4 H(+)(out). In terms of biological role, core subunit of the mitochondrial membrane respiratory chain NADH dehydrogenase (Complex I) which catalyzes electron transfer from NADH through the respiratory chain, using ubiquinone as an electron acceptor. Essential for the catalytic activity of complex I. This Podomys floridanus (Florida mouse) protein is NADH-ubiquinone oxidoreductase chain 3.